The sequence spans 231 residues: 5'-methylthioadenosine/S-adenosylhomocysteine nucleosidase (231 aa).

E12 functions as the Proton acceptor in the catalytic mechanism. Substrate contacts are provided by residues G78, M153, and 174–175; that span reads ME. Catalysis depends on D198, which acts as the Proton donor.

Belongs to the PNP/UDP phosphorylase family. MtnN subfamily.

The enzyme catalyses S-adenosyl-L-homocysteine + H2O = S-(5-deoxy-D-ribos-5-yl)-L-homocysteine + adenine. It catalyses the reaction S-methyl-5'-thioadenosine + H2O = 5-(methylsulfanyl)-D-ribose + adenine. It carries out the reaction 5'-deoxyadenosine + H2O = 5-deoxy-D-ribose + adenine. Its pathway is amino-acid biosynthesis; L-methionine biosynthesis via salvage pathway; S-methyl-5-thio-alpha-D-ribose 1-phosphate from S-methyl-5'-thioadenosine (hydrolase route): step 1/2. In terms of biological role, catalyzes the irreversible cleavage of the glycosidic bond in both 5'-methylthioadenosine (MTA) and S-adenosylhomocysteine (SAH/AdoHcy) to adenine and the corresponding thioribose, 5'-methylthioribose and S-ribosylhomocysteine, respectively. Also cleaves 5'-deoxyadenosine, a toxic by-product of radical S-adenosylmethionine (SAM) enzymes, into 5-deoxyribose and adenine. This is 5'-methylthioadenosine/S-adenosylhomocysteine nucleosidase from Bacillus cereus (strain B4264).